Reading from the N-terminus, the 412-residue chain is uncharacterized protein (412 aa).

Residue histidine 49 participates in Zn(2+) binding. The active-site Proton acceptor is the glutamate 52. Residues histidine 53 and glutamate 129 each contribute to the Zn(2+) site.

It belongs to the peptidase M16 family. The cofactor is Zn(2+).

This is an uncharacterized protein from Rickettsia felis (strain ATCC VR-1525 / URRWXCal2) (Rickettsia azadi).